The following is a 605-amino-acid chain: MGGCFSKPKPVELKIEVVLPEKERGKEELSASGKGSPRAYQGNGTARHFHTEERLSTPHPYPSPQDCVEAAVCHVKDLENGQMREVELGWGKVLLVKDNGEFHALGHKCPHYGAPLVKGVLSRGRVRCPWHGACFNISTGDLEDFPGLDSLHKFQVKIEKEKVYVRASKQALQLQRRTKVMAKCISPSAGYSSSTNVLIVGAGAAGLVCAETLRQEGFSDRIVLCTLDRHLPYDRPKLSKSLDTQPEQLALRPKEFFRAYGIEVLTEAQVVTVDVRTKKVVFKDGFKLEYSKLLLAPGSSPKTLSCKGKEVENVFTIRTPEDANRVVRLARGRNVVVVGAGFLGMEVAAYLTEKAHSVSVVELEETPFRRFLGERVGRALMKMFENNRVKFYMQTEVSELRGQEGKLKEVVLKSSKVVRADVCVVGIGAVPATGFLRQSGIGLDSRGFIPVNKMMQTNVPGVFAAGDAVTFPLAWRNNRKVNIPHWQMAHAQGRVAAQNMLAQEAEMSTVPYLWTAMFGKSLRYAGYGEGFDDVIIQGDLEELKFVAFYTKGDEVIAVASMNYDPIVSKVAEVLASGRAIRKREVELFVLHSKTGDMSWLTGKGS.

A disordered region spans residues K22–T45. Residues A70–V165 form the Rieske domain. 4 residues coordinate [2Fe-2S] cluster: C109, H111, C128, and H131. FAD contacts are provided by residues G201–A205, R235, K240, V270, D467, and W514.

It belongs to the FAD-dependent oxidoreductase family. In terms of tissue distribution, ubiquitous. Expressed in bone marrow, cerebral cortex, liver, ovary, thymus, thyroid gland and tongue (at protein level).

The protein localises to the mitochondrion. Its function is as follows. Induces apoptosis through a caspase dependent pathway. Reduces mitochondrial membrane potential. The chain is Apoptosis-inducing factor 3 (AIFM3) from Homo sapiens (Human).